Consider the following 351-residue polypeptide: Modulator of apoptosis 1 (351 aa).

The short motif at 49–52 is the LIR element; it reads YRLL. Positions 120–127 are BH3-like; the sequence is LSRALGHE. The tract at residues 202-205 is RASSF1-binding; that stretch reads KRRR.

The protein belongs to the PNMA family. Homodimer. Under normal circumstances, held in an inactive conformation by an intramolecular interaction. Interacts with BAX. Binding to RASSF1 isoform A (RASSF1A) relieves this inhibitory interaction and allows further binding to BAX. Also binds to BCL2 and BCLX. Recruited to the TNFRSF1A and TNFRSF10A complexes in response to their respective cognate ligand, after internalization. Interacts with TRIM39. Interacts with RASSF6. Interacts with ATG8 proteins MAP1LC3A, MAP1LC3B and MAP1LC3C. Does not interact with ATG8 proteins GABARAPL1, GABARAPL2 and GABARAP. Interacts with SQSTM1; promoting dissociation of SQSTM1 inclusion bodies that sequester KEAP1. Ubiquitinated and degraded during mitotic exit by APC/C-Cdh1, this modification is inhibited by TRIM39. Widely expressed, with high levels in heart and brain.

It is found in the cytoplasm. It localises to the cytosol. The protein resides in the mitochondrion outer membrane. The protein localises to the extracellular vesicle membrane. Its function is as follows. Retrotransposon-derived protein that forms virion-like capsids. Acts as an effector of BAX during apoptosis: enriched at outer mitochondria membrane and associates with BAX upon induction of apoptosis, facilitating BAX-dependent mitochondrial outer membrane permeabilization and apoptosis. Required for death receptor-dependent apoptosis. When associated with RASSF1, promotes BAX conformational change and translocation to mitochondrial membranes in response to TNF and TNFSF10 stimulation. Also promotes autophagy: promotes phagophore closure via association with ATG8 proteins. Acts as an inhibitor of the NFE2L2/NRF2 pathway via interaction with SQSTM1: interaction promotes dissociation of SQSTM1 inclusion bodies that sequester KEAP1, relieving inactivation of the BCR(KEAP1) complex. This chain is Modulator of apoptosis 1, found in Homo sapiens (Human).